The following is a 338-amino-acid chain: Nodulation outer protein L (338 aa).

Over residues 1–14 (MDINSTSPLNASPQ) the composition is skewed to polar residues. 4 disordered regions span residues 1–48 (MDIN…LPQV), 85–158 (TRER…DLET), 187–209 (SPAPLTAERGRSPQPSEQQPHAR), and 230–259 (PQAGPWQVGPSHSGPSQARPSHAWPSSSAG). The segment covering 85 to 97 (TRERSPHPSEQRP) has biased composition (basic and acidic residues). Residues 126–138 (VGPSRSGPSQAGL) are compositionally biased toward polar residues. The segment covering 242–258 (SGPSQARPSHAWPSSSA) has biased composition (polar residues).

The protein localises to the secreted. In terms of biological role, putative symbiotic effector that modulates nodulation in legumes. When delivered into the plant cell, modulates the activity of signal transduction pathways that culminate in activation of PR proteins. This chain is Nodulation outer protein L (nopL), found in Sinorhizobium fredii (strain NBRC 101917 / NGR234).